Consider the following 1199-residue polypeptide: Nucleolar protein 6 (1199 aa).

The span at 1-10 (MLRNKRKAGK) shows a compositional bias: basic residues. 2 disordered regions span residues 1–51 (MLRN…EPKP) and 1146–1199 (KREQ…KALK). Composition is skewed to basic and acidic residues over residues 28 to 37 (HAEDHSDLEH) and 1146 to 1169 (KREQ…EKST).

It belongs to the NRAP family. In terms of assembly, part of the small subunit (SSU) processome, composed of more than 70 proteins and the RNA chaperone small nucleolar RNA (snoRNA) U3.

It localises to the nucleus. Its subcellular location is the nucleolus. The protein resides in the chromosome. In terms of biological role, part of the small subunit (SSU) processome, first precursor of the small eukaryotic ribosomal subunit. During the assembly of the SSU processome in the nucleolus, many ribosome biogenesis factors, an RNA chaperone and ribosomal proteins associate with the nascent pre-rRNA and work in concert to generate RNA folding, modifications, rearrangements and cleavage as well as targeted degradation of pre-ribosomal RNA by the RNA exosome. The protein is Nucleolar protein 6 of Drosophila yakuba (Fruit fly).